The chain runs to 210 residues: Probable GTP-binding protein EngB (210 aa).

One can recognise an EngB-type G domain in the interval 25-199 (RGIEVAFAGR…RQKLDSWFSE (175 aa)). GTP contacts are provided by residues 33-40 (GRSNAGKS), 60-64 (GRTQL), 78-81 (DLPG), 145-148 (TKAD), and 178-180 (FSS). 2 residues coordinate Mg(2+): Ser40 and Thr62.

The protein belongs to the TRAFAC class TrmE-Era-EngA-EngB-Septin-like GTPase superfamily. EngB GTPase family. Mg(2+) is required as a cofactor.

In terms of biological role, necessary for normal cell division and for the maintenance of normal septation. This chain is Probable GTP-binding protein EngB, found in Salmonella paratyphi B (strain ATCC BAA-1250 / SPB7).